The chain runs to 177 residues: Large ribosomal subunit protein uL6 (177 aa).

It belongs to the universal ribosomal protein uL6 family. Part of the 50S ribosomal subunit.

This protein binds to the 23S rRNA, and is important in its secondary structure. It is located near the subunit interface in the base of the L7/L12 stalk, and near the tRNA binding site of the peptidyltransferase center. The sequence is that of Large ribosomal subunit protein uL6 from Bordetella bronchiseptica (strain ATCC BAA-588 / NCTC 13252 / RB50) (Alcaligenes bronchisepticus).